A 203-amino-acid chain; its full sequence is Large ribosomal subunit protein eL15 (203 aa).

The disordered stretch occupies residues 160 to 186 (ESRGLTSTGKRSRGLNKGHRYNKTRAG). Over residues 169-186 (KRSRGLNKGHRYNKTRAG) the composition is skewed to basic residues.

It belongs to the eukaryotic ribosomal protein eL15 family. Component of the large ribosomal subunit (LSU). Mature N.crassa ribosomes consist of a small (40S) and a large (60S) subunit. The 40S small subunit contains 1 molecule of ribosomal RNA (18S rRNA) and at least 32 different proteins. The large 60S subunit contains 3 rRNA molecules (26S, 5.8S and 5S rRNA) and at least 42 different proteins.

Its subcellular location is the cytoplasm. Its function is as follows. Component of the ribosome, a large ribonucleoprotein complex responsible for the synthesis of proteins in the cell. The small ribosomal subunit (SSU) binds messenger RNAs (mRNAs) and translates the encoded message by selecting cognate aminoacyl-transfer RNA (tRNA) molecules. The large subunit (LSU) contains the ribosomal catalytic site termed the peptidyl transferase center (PTC), which catalyzes the formation of peptide bonds, thereby polymerizing the amino acids delivered by tRNAs into a polypeptide chain. The nascent polypeptides leave the ribosome through a tunnel in the LSU and interact with protein factors that function in enzymatic processing, targeting, and the membrane insertion of nascent chains at the exit of the ribosomal tunnel. The sequence is that of Large ribosomal subunit protein eL15 (rpl-15) from Neurospora crassa (strain ATCC 24698 / 74-OR23-1A / CBS 708.71 / DSM 1257 / FGSC 987).